The sequence spans 70 residues: UPF0519 protein B (70 aa).

Belongs to the UPF0519 family.

In Dictyostelium discoideum (Social amoeba), this protein is UPF0519 protein B (sigN122).